The chain runs to 352 residues: Nuclear receptor subfamily 1 group I member 3 (352 aa).

A DNA-binding region (nuclear receptor) is located at residues 8–83 (LRNCVVCGDQ…AGMRKDMILS (76 aa)). Residues 11-31 (CVVCGDQATGYHFNALTCEGC) form an NR C4-type zinc finger. Phosphothreonine; by PKC is present on threonine 38. The NR C4-type zinc-finger motif lies at 47 to 71 (CPFAGSCEVSKTQRRHCPACRLQKC). The region spanning 109–352 (EQEELIRTLL…MMPLLQEICS (244 aa)) is the NR LBD domain.

It belongs to the nuclear hormone receptor family. NR1 subfamily. As to quaternary structure, interacts with ECT2. Heterodimer of NR1I3 and RXR. Interacts with PSMC4. Directly interacts with DNAJC7. The DNAJC7-NR1I3 complex may also include HSP90. Interacts with CRY1. Interacts with CRY2 in a ligand-dependent manner. In terms of processing, phosphorylated at Thr-38 by PKC, dephosphorylation of Thr-38 is required for nuclear translocation and activation. Predominantly expressed in liver.

The protein resides in the nucleus. Its subcellular location is the cytoplasm. The protein localises to the cytoskeleton. Functionally, binds and transactivates the retinoic acid response elements that control expression of the retinoic acid receptor beta 2 and alcohol dehydrogenase 3 genes. Transactivates both the phenobarbital responsive element module of the human CYP2B6 gene and the CYP3A4 xenobiotic response element. The chain is Nuclear receptor subfamily 1 group I member 3 (NR1I3) from Homo sapiens (Human).